The chain runs to 308 residues: GTP cyclohydrolase FolE2 (308 aa).

It belongs to the GTP cyclohydrolase IV family.

The enzyme catalyses GTP + H2O = 7,8-dihydroneopterin 3'-triphosphate + formate + H(+). It participates in cofactor biosynthesis; 7,8-dihydroneopterin triphosphate biosynthesis; 7,8-dihydroneopterin triphosphate from GTP: step 1/1. Its function is as follows. Converts GTP to 7,8-dihydroneopterin triphosphate. The chain is GTP cyclohydrolase FolE2 from Colwellia psychrerythraea (strain 34H / ATCC BAA-681) (Vibrio psychroerythus).